The sequence spans 182 residues: Neuropeptide CCHamide-1 (182 aa).

A signal peptide spans 1 to 22 (MWYSKCSWTLVVLVALFALVTG). The cysteines at positions 24 and 31 are disulfide-linked. At His35 the chain carries Histidine amide. Positions 39-182 (SGGKAVIDAK…ENYSGYELTK (144 aa)) are excised as a propeptide. Disordered stretches follow at residues 67-103 (NNNN…AAPA) and 133-154 (QLQD…DAAA). Over residues 87–103 (RNTNANSANNIPLAAPA) the composition is skewed to low complexity. A glycan (N-linked (GlcNAc...) asparagine) is linked at Asn174.

As to expression, expressed in endocrine cells of the larval midgut (at protein level). In the brain, expressed in the optic lobes, lateral protocerebrum, subesophageal ganglion, and intermediate and superior medial protocerebrum (at protein level). Expressed in DN1a neurons but not in other clock neurons and expression follows a rhythmic pattern controlled by the circadian clock (at protein level). In the posterior midgut, expressed in enteroendocrine cells (at protein level). Low levels in larval brain with higher levels in larval and adult gut and adult brain.

Its subcellular location is the secreted. In terms of biological role, neuropeptide ligand for the CCHamide-1 receptor CCHa1-R. Neuromessenger mediating signaling between neuronal cells of the circadian clock network involved in regulation of sleep latency (the time required to fall asleep), amount of sleep and depth of sleep (arousability). Together with PDF, involved in regulating intensity and periodicity of daytime activity. In subsets of clock neurons modulates the rhythmic expression of PDP1 and PDF, and together with PDF modulates the rhythmic expression of circadian protein PER/period, but not TIM/timeless. Mediates signaling from DN1a (anterior dorsal neurons 1) clock neurons to s-LNv (small ventral lateral neurons) clock neurons through CCHa1-R, contributing to regulation of activity rhythms by the circadian clock, particularly in the morning. May be involved in signaling between clock neurons and non-clock neurons, such as the fan-shaped body, involved in sleep homeostasis. In response to a high protein diet mediates hormonal signaling between the gut and a CCHa1-R expressing subset of dopaminergic cells in the protocerebral anterior medial (PAM) cluster of the brain. This suppresses arousability by mechano-sensory stimulation (but not thermal stimulation) but is not involved in regulation of sleep patterns. This chain is Neuropeptide CCHamide-1, found in Drosophila melanogaster (Fruit fly).